Reading from the N-terminus, the 697-residue chain is Probable translocation protein y4yR (697 aa).

8 helical membrane passes run 20-40 (VALMLLLAVSMMVMPIPVMAV), 42-62 (ALIGFNMGLAVLLLMAALYVS), 67-87 (FSSLPGVILLSTVFRLALTVA), 107-127 (SFVISGNIVVGFVIFLVVTMV), 200-220 (SIAGLVVICINMLGGISIGLL), 235-255 (LLTIGDALISQIPALLLSITA), 293-313 (VAMGFVPGFPLPVFFMLAAVF), and 372-392 (IARISQLVSADLGIIVPPIPV). Residues 675-697 (IRLPPSNGTSGEPRSIRPSATTG) form a disordered region. Residues 680–697 (SNGTSGEPRSIRPSATTG) show a composition bias toward polar residues.

Belongs to the FHIPEP (flagella/HR/invasion proteins export pore) family.

Its subcellular location is the cell inner membrane. Its function is as follows. Could be involved in the secretion of an unknown factor. The sequence is that of Probable translocation protein y4yR from Sinorhizobium fredii (strain NBRC 101917 / NGR234).